The chain runs to 195 residues: MRQAEITRNTLETQITVRLNLDGTGQGKYATGVPFLDHMLDQIARHGLIDLDIEAKGDLHIDAHHTVEDIGITFGQALAKAWGDKKGLTRYGHSYVPLDEALSRVVIDLSGRPGLELHVEFTRAVIGTFDVDLVGEFFHGLVNHAGMTLHIDNLRGKNAHHQAETIFKAFGRALRMAVTPDPRMAGTMPSTKGSL.

Belongs to the imidazoleglycerol-phosphate dehydratase family.

It localises to the cytoplasm. It carries out the reaction D-erythro-1-(imidazol-4-yl)glycerol 3-phosphate = 3-(imidazol-4-yl)-2-oxopropyl phosphate + H2O. The protein operates within amino-acid biosynthesis; L-histidine biosynthesis; L-histidine from 5-phospho-alpha-D-ribose 1-diphosphate: step 6/9. The polypeptide is Imidazoleglycerol-phosphate dehydratase (Dechloromonas aromatica (strain RCB)).